The primary structure comprises 148 residues: uncharacterized protein (148 aa).

The N-acetyltransferase domain maps to 7–148 (LEINYKTDEL…HDVLLWKPIR (142 aa)).

This is an uncharacterized protein from Staphylococcus aureus (strain Mu50 / ATCC 700699).